Consider the following 432-residue polypeptide: MGTCLTTAEQRAMEVPAASVKGGGGRRSDEEAPGRIAGNGAGNVACLFTRQGKKGTNQDAMVAWENYNGRSDTVFCGVFDGHGPHGHLIARKVRDILPSRLCDLIYEDCGDSPTSNSDVSTLEENLSPYADAECRSPTLAGQKEHQEFFNAMKESFRKAFKNVDKELKLQRNIDSICSGTTAVTLIKQGHDLIVGNLGDSRAVLGTRDQNDKLVAHQLTVDLKPDHPREARRIRRCNGRVFAHQDEPDVARLWLPNCNSPGLAMARAFGDFCLKDFGLISVPDVTYRQITEKDEFIVLATDGVWDVLSNQEVVDVVASCSGRFAAARSVVDLANETWRFKYPTSKTDDCAVVCLFLNKYEVTGGLSGQPGYSPRMPALSGITRPNSKRVTPDDVDDGSDSNVSGDERSLDGFTRLNTLLALPKFGDTSPTKK.

Residues 44 to 356 form the PPM-type phosphatase domain; it reads VACLFTRQGK…DDCAVVCLFL (313 aa). 4 residues coordinate Mn(2+): Asp-80, Gly-81, Asp-301, and Asp-347. A disordered region spans residues 372–408; the sequence is SPRMPALSGITRPNSKRVTPDDVDDGSDSNVSGDERS.

It belongs to the PP2C family. It depends on Mg(2+) as a cofactor. Mn(2+) serves as cofactor.

It carries out the reaction O-phospho-L-seryl-[protein] + H2O = L-seryl-[protein] + phosphate. The enzyme catalyses O-phospho-L-threonyl-[protein] + H2O = L-threonyl-[protein] + phosphate. This is Probable protein phosphatase 2C 75 from Oryza sativa subsp. japonica (Rice).